The following is a 216-amino-acid chain: Thiopurine S-methyltransferase (216 aa).

The S-adenosyl-L-methionine site is built by W10, L45, E66, and R123.

Belongs to the class I-like SAM-binding methyltransferase superfamily. TPMT family.

The protein resides in the cytoplasm. It catalyses the reaction S-adenosyl-L-methionine + a thiopurine = S-adenosyl-L-homocysteine + a thiopurine S-methylether.. This Pseudomonas putida (strain ATCC 700007 / DSM 6899 / JCM 31910 / BCRC 17059 / LMG 24140 / F1) protein is Thiopurine S-methyltransferase.